Reading from the N-terminus, the 657-residue chain is C4-dicarboxylate transport sensor protein DctS (657 aa).

The Cytoplasmic segment spans residues 1 to 26; it reads MRDTTGGPAGAEVWTVPGLLGARKLD. Residues 27 to 51 traverse the membrane as a helical segment; sequence LLALIPLVAIVALMTLVGALLFAVA. Residues 52–252 are Periplasmic-facing; it reads QSDANRARAK…AYDAPDAFGN (201 aa). The helical transmembrane segment at 253–273 threads the bilayer; it reads AALLAAIGALSVFAVLAMVVL. Topologically, residues 274 to 657 are cytoplasmic; sequence HRNALRRRMA…LPVPQEGAPA (384 aa). The PAS domain occupies 289-361; it reads AEMAFRRAME…ARQRQLIEGQ (73 aa). Residues 365–417 form the PAC domain; sequence QAFETRFRRSDGSEIEVQVFEAPLIDAGGRHRGWMGSVIDITQAKQAARLARA. An inter-domain linker region spans residues 407–422; sequence QAKQAARLARAQDESL. The Histidine kinase domain maps to 437 to 652; that stretch reads TLAHELNQPL…VFTVTLPVPQ (216 aa). H440 bears the Phosphohistidine; by autocatalysis mark.

It is found in the cell inner membrane. The catalysed reaction is ATP + protein L-histidine = ADP + protein N-phospho-L-histidine.. Functionally, member of the two-component regulatory system DctS/DctR involved in the transport of C4-dicarboxylates. DctS functions as a membrane-associated protein kinase that phosphorylates DctR in response to environmental signals. This Rhodobacter capsulatus (Rhodopseudomonas capsulata) protein is C4-dicarboxylate transport sensor protein DctS (dctS).